The following is a 292-amino-acid chain: Protein LRATD1 (292 aa).

Phosphoserine is present on Ser38. The region spanning 133–228 (PAPEPPAPAP…CRFGKREFKA (96 aa)) is the LRAT domain.

Belongs to the LRATD family. As to expression, only detected in testis. Highly expressed in colon cancer cells.

Its subcellular location is the cytoplasm. In terms of biological role, may play a role in cell morphology and motility. The polypeptide is Protein LRATD1 (Homo sapiens (Human)).